A 154-amino-acid polypeptide reads, in one-letter code: Large ribosomal subunit protein uL13 (154 aa).

The protein belongs to the universal ribosomal protein uL13 family. In terms of assembly, part of the 50S ribosomal subunit.

Its function is as follows. This protein is one of the early assembly proteins of the 50S ribosomal subunit, although it is not seen to bind rRNA by itself. It is important during the early stages of 50S assembly. The polypeptide is Large ribosomal subunit protein uL13 (Rhizobium etli (strain CIAT 652)).